We begin with the raw amino-acid sequence, 190 residues long: Vespryn-21 (190 aa).

An N-terminal signal peptide occupies residues 1–20 (MLLFTLCFFADLENGGKALA). A B30.2/SPRY domain is found at 21–127 (SPPGKWQKAD…LIWQRGLWFL (107 aa)). A propeptide spanning residues 128–190 (QRLETDSDKL…LGGGVSLTNL (63 aa)) is cleaved from the precursor.

It belongs to the ohanin/vespryn family. As to expression, expressed by the venom gland.

It is found in the secreted. Neurotoxin that produces dose-dependent hypolocomotion and hyperalgesia in mice. May directly act on the central nervous system, as it is 6500-fold more potent when administered intracerebroventricularly than intraperitoneal. The polypeptide is Vespryn-21 (Drysdalia coronoides (White-lipped snake)).